The following is a 318-amino-acid chain: tRNA pseudouridine synthase B (318 aa).

Catalysis depends on Asp-54, which acts as the Nucleophile.

The protein belongs to the pseudouridine synthase TruB family. Type 1 subfamily.

The enzyme catalyses uridine(55) in tRNA = pseudouridine(55) in tRNA. Responsible for synthesis of pseudouridine from uracil-55 in the psi GC loop of transfer RNAs. This Ralstonia pickettii (strain 12J) protein is tRNA pseudouridine synthase B.